A 384-amino-acid chain; its full sequence is 1-deoxy-D-xylulose 5-phosphate reductoisomerase (384 aa).

NADPH contacts are provided by T10, G11, S12, I13, G36, N38, and N122. K123 is a 1-deoxy-D-xylulose 5-phosphate binding site. E124 serves as a coordination point for NADPH. A Mn(2+)-binding site is contributed by D148. 1-deoxy-D-xylulose 5-phosphate is bound by residues S149, E150, S174, and H197. Residue E150 participates in Mn(2+) binding. An NADPH-binding site is contributed by G203. Residues S210, N215, K216, and E219 each contribute to the 1-deoxy-D-xylulose 5-phosphate site. Residue E219 participates in Mn(2+) binding.

The protein belongs to the DXR family. The cofactor is Mg(2+). It depends on Mn(2+) as a cofactor.

The enzyme catalyses 2-C-methyl-D-erythritol 4-phosphate + NADP(+) = 1-deoxy-D-xylulose 5-phosphate + NADPH + H(+). It functions in the pathway isoprenoid biosynthesis; isopentenyl diphosphate biosynthesis via DXP pathway; isopentenyl diphosphate from 1-deoxy-D-xylulose 5-phosphate: step 1/6. Catalyzes the NADPH-dependent rearrangement and reduction of 1-deoxy-D-xylulose-5-phosphate (DXP) to 2-C-methyl-D-erythritol 4-phosphate (MEP). The polypeptide is 1-deoxy-D-xylulose 5-phosphate reductoisomerase (Geobacter metallireducens (strain ATCC 53774 / DSM 7210 / GS-15)).